The primary structure comprises 264 residues: 3-methyl-2-oxobutanoate hydroxymethyltransferase (264 aa).

Mg(2+) contacts are provided by Asp-45 and Asp-84. 3-methyl-2-oxobutanoate contacts are provided by residues Asp-45 to Ser-46, Asp-84, and Lys-112. Glu-114 lines the Mg(2+) pocket. Glu-181 acts as the Proton acceptor in catalysis.

It belongs to the PanB family. In terms of assembly, homodecamer; pentamer of dimers. Mg(2+) serves as cofactor.

It localises to the cytoplasm. The catalysed reaction is 3-methyl-2-oxobutanoate + (6R)-5,10-methylene-5,6,7,8-tetrahydrofolate + H2O = 2-dehydropantoate + (6S)-5,6,7,8-tetrahydrofolate. It participates in cofactor biosynthesis; (R)-pantothenate biosynthesis; (R)-pantoate from 3-methyl-2-oxobutanoate: step 1/2. In terms of biological role, catalyzes the reversible reaction in which hydroxymethyl group from 5,10-methylenetetrahydrofolate is transferred onto alpha-ketoisovalerate to form ketopantoate. This is 3-methyl-2-oxobutanoate hydroxymethyltransferase from Photobacterium profundum (strain SS9).